The sequence spans 307 residues: Universal stress protein A family protein C25B2.10 (307 aa).

Residues methionine 1–arginine 63 form a disordered region. Residues proline 21 to glutamine 30 are compositionally biased toward basic and acidic residues. A Phosphoserine modification is found at serine 44. Threonine 48 carries the post-translational modification Phosphothreonine. Residues serine 98 and serine 102 each carry the phosphoserine modification.

Belongs to the universal stress protein A family.

The protein resides in the barrier septum. It localises to the cell tip. This Schizosaccharomyces pombe (strain 972 / ATCC 24843) (Fission yeast) protein is Universal stress protein A family protein C25B2.10.